The chain runs to 619 residues: Phosphomethylpyrimidine synthase (619 aa).

The span at 1–11 shows a compositional bias: polar residues; the sequence is MHEQRSLTMNA. The tract at residues 1 to 25 is disordered; that stretch reads MHEQRSLTMNALTPAVSTGPLPASR. Substrate-binding positions include N220, M249, Y278, H314, 334 to 336, 375 to 378, and E414; these read SRG and DGLR. Position 418 (H418) interacts with Zn(2+). Y441 serves as a coordination point for substrate. H482 contacts Zn(2+). C562, C565, and C570 together coordinate [4Fe-4S] cluster.

This sequence belongs to the ThiC family. In terms of assembly, homodimer. Requires [4Fe-4S] cluster as cofactor.

It catalyses the reaction 5-amino-1-(5-phospho-beta-D-ribosyl)imidazole + S-adenosyl-L-methionine = 4-amino-2-methyl-5-(phosphooxymethyl)pyrimidine + CO + 5'-deoxyadenosine + formate + L-methionine + 3 H(+). The protein operates within cofactor biosynthesis; thiamine diphosphate biosynthesis. Functionally, catalyzes the synthesis of the hydroxymethylpyrimidine phosphate (HMP-P) moiety of thiamine from aminoimidazole ribotide (AIR) in a radical S-adenosyl-L-methionine (SAM)-dependent reaction. The polypeptide is Phosphomethylpyrimidine synthase (Mesorhizobium japonicum (strain LMG 29417 / CECT 9101 / MAFF 303099) (Mesorhizobium loti (strain MAFF 303099))).